The chain runs to 561 residues: MKTDWWKDAVVYQIYPRSFQDSNGDGIGDLRGIISRLDYIKELGADVIWICPIYPSPNVDYGYDVTNHKAIMDSYGTMDDFHELLDQVHQRGLKLVMDFVLNHTSVEHPWFKEAELDKNSKYRSYYYWRPGTKNGPPTDWLSNYGCPVWQYEEHTGEYYLHMNAVKQADLNWENPEVRQAVYDMMKFWLDKGVDGLRIDQLHLISKKEYLPSYEDYINQQAEPKPFQPNGERIHDYLKEITDEVFSHYDVMSVGEVGSVTPEEGLKYTGTDKHELNMIFHFQHMELDQQPGKEHWDLKPLELSDLKSVLTKWQKKLEHQGWNTLFWCNHDQPRIVSRFGDDGEYRKASAKMLAAVIYFMKGTPYIYQGEEIGMTNAPFTRIEDYKDIQTINMYHKRVFEKGYDPNDVMRSILAKSRDHARTPMQWNSGKNAGFTDGTPWLKVNPNFTAINVEEAQGDPDSVLNYYKKLISLRKQYADLMKGSFDLLLPDDPQLFVYMRENSKQQLLSVNNFSKEQAVFQWPKNCGKAQASLLLSNYNNDDLDDEMVFRPYESRVYLLDKTN.

The active-site Nucleophile is Asp199. Catalysis depends on Glu255, which acts as the Proton donor.

The protein belongs to the glycosyl hydrolase 13 family.

Its subcellular location is the cytoplasm. The catalysed reaction is Hydrolysis of (1-&gt;6)-alpha-D-glucosidic linkages in some oligosaccharides produced from starch and glycogen by alpha-amylase, and in isomaltose.. In Bacillus subtilis (strain 168), this protein is Probable oligo-1,6-glucosidase 2 (ycdG).